The primary structure comprises 220 residues: Coat protein TP4 (220 aa).

The protein resides in the virion. This chain is Coat protein TP4, found in Thermoproteus tenax (TTV1).